Reading from the N-terminus, the 294-residue chain is RAB7A-interacting MON1-CCZ1 complex subunit 1 (294 aa).

Ala2 carries the N-acetylalanine modification.

It belongs to the RIMOC1 family. As to quaternary structure, interacts with the MON1A-CCZ1B complex. Interacts with GDP-bound RAB7A and promotes its interaction with the MON1A-CCZ1B complex.

The protein resides in the cytoplasm. Its subcellular location is the cytosol. Its function is as follows. Plays an important role in the removal of damaged mitochondria via mitophagy by controlling the stability and localization of RAB7A. Required for the recruitment of RAB7A and ATG9A vesicles to damaged mitochondria and promotes the stability of RAB7A by inhibiting its proteasomal degradation during mitophagy. This chain is RAB7A-interacting MON1-CCZ1 complex subunit 1, found in Homo sapiens (Human).